A 236-amino-acid polypeptide reads, in one-letter code: Purine nucleoside phosphorylase DeoD-type (236 aa).

His-5 lines the a purine D-ribonucleoside pocket. Phosphate contacts are provided by residues Gly-21, Arg-25, Arg-44, and 88–91 (RIGS). Residues 180 to 182 (EME) and 204 to 205 (SD) contribute to the a purine D-ribonucleoside site. The active-site Proton donor is Asp-205.

It belongs to the PNP/UDP phosphorylase family. Homohexamer; trimer of homodimers.

It carries out the reaction a purine D-ribonucleoside + phosphate = a purine nucleobase + alpha-D-ribose 1-phosphate. The enzyme catalyses a purine 2'-deoxy-D-ribonucleoside + phosphate = a purine nucleobase + 2-deoxy-alpha-D-ribose 1-phosphate. Catalyzes the reversible phosphorolytic breakdown of the N-glycosidic bond in the beta-(deoxy)ribonucleoside molecules, with the formation of the corresponding free purine bases and pentose-1-phosphate. This chain is Purine nucleoside phosphorylase DeoD-type, found in Hahella chejuensis (strain KCTC 2396).